The following is a 38-amino-acid chain: Mu-agatoxin-Hc1b (38 aa).

Intrachain disulfides connect cysteine 3/cysteine 19, cysteine 10/cysteine 24, cysteine 18/cysteine 34, and cysteine 26/cysteine 32. A Serine amide modification is found at serine 38.

It belongs to the neurotoxin 07 (Beta/delta-agtx) family. 02 (aga-3) subfamily. In terms of tissue distribution, expressed by the venom gland.

It is found in the secreted. Functionally, insecticidal neurotoxin that induces irreversible neuromuscular blockade in house crickets (A.domesticus). Modifies presynaptic voltage-gated sodium channels (Nav), causing them to open at the normal resting potential of the nerve. This leads to spontaneous release of neurotransmitter and repetitive action potentials in motor neurons. The sequence is that of Mu-agatoxin-Hc1b from Hololena curta (Funnel-web spider).